A 199-amino-acid polypeptide reads, in one-letter code: CASP-like protein 1B2 (199 aa).

Topologically, residues 1–22 are cytoplasmic; it reads MALQSEEKLEVGYSSLQPKTRK. The helical transmembrane segment at 23 to 43 threads the bilayer; sequence WVLLMLRVLAFFATAAATVVM. The Extracellular portion of the chain corresponds to 44–74; the sequence is GLNKETKTLVVATVGSTPIKASLAAKFQHTP. Residues 75–95 form a helical membrane-spanning segment; that stretch reads AFVFFVIANGLASIHNLVMIM. At 96 to 112 the chain is on the cytoplasmic side; that stretch reads GDLFGQKLDYKGLRLAM. A helical membrane pass occupies residues 113–133; it reads IAILDMMTVALVSGGVSAAAF. Over 134 to 163 the chain is Extracellular; sequence MAELGKNGNSHARWNKICDKFETFCDHGGG. Residues 164-184 traverse the membrane as a helical segment; that stretch reads ALIASFAGLILMLIISVMSII. Topologically, residues 185-199 are cytoplasmic; it reads KLLIKPKPDSTIVVP.

This sequence belongs to the Casparian strip membrane proteins (CASP) family. Homodimer and heterodimers.

Its subcellular location is the cell membrane. The chain is CASP-like protein 1B2 from Populus trichocarpa (Western balsam poplar).